The sequence spans 430 residues: Asparagine--tRNA ligase (430 aa).

It belongs to the class-II aminoacyl-tRNA synthetase family. In terms of assembly, homodimer.

The protein localises to the cytoplasm. It catalyses the reaction tRNA(Asn) + L-asparagine + ATP = L-asparaginyl-tRNA(Asn) + AMP + diphosphate + H(+). The protein is Asparagine--tRNA ligase of Bacillus licheniformis (strain ATCC 14580 / DSM 13 / JCM 2505 / CCUG 7422 / NBRC 12200 / NCIMB 9375 / NCTC 10341 / NRRL NRS-1264 / Gibson 46).